Consider the following 170-residue polypeptide: Adenine phosphoribosyltransferase (170 aa).

Belongs to the purine/pyrimidine phosphoribosyltransferase family. As to quaternary structure, homodimer.

The protein localises to the cytoplasm. It carries out the reaction AMP + diphosphate = 5-phospho-alpha-D-ribose 1-diphosphate + adenine. The protein operates within purine metabolism; AMP biosynthesis via salvage pathway; AMP from adenine: step 1/1. Functionally, catalyzes a salvage reaction resulting in the formation of AMP, that is energically less costly than de novo synthesis. In Prochlorococcus marinus (strain AS9601), this protein is Adenine phosphoribosyltransferase.